Reading from the N-terminus, the 343-residue chain is Thioredoxin domain-containing protein 15 (343 aa).

The N-terminal stretch at 1-20 (MQLLCWWQILLWVLGLPARG) is a signal peptide. The Extracellular segment spans residues 21–304 (LEEDSGHTWQ…GPLPSTLVKT (284 aa)). Residues 86–95 (EDQRSTEAHD) show a composition bias toward basic and acidic residues. The tract at residues 86-112 (EDQRSTEAHDGTCSAQGDEDPRCGGRE) is disordered. Residues 162–279 (ERNVTGLENF…LKIFIFNQTG (118 aa)) enclose the Thioredoxin domain. Residues Asn-170, Asn-177, Asn-189, and Asn-276 are each glycosylated (N-linked (GlcNAc...) asparagine). The chain crosses the membrane as a helical span at residues 305–325 (VDWLLVFSLFFLISFIMYATI). Residues 326–343 (RTESIRWLIPGQEQEHAE) are Cytoplasmic-facing.

Its subcellular location is the cell projection. It is found in the cilium membrane. Acts as a positive regulator of ciliary hedgehog signaling. Required for cilia biogenesis. The chain is Thioredoxin domain-containing protein 15 (Txndc15) from Rattus norvegicus (Rat).